The primary structure comprises 196 residues: HTH-type transcriptional regulator Hpr (196 aa).

The region spanning 13–157 (SIVFSHKMAL…LICIVRHIYG (145 aa)) is the HTH marR-type domain. Positions 63–86 (ISDIASHGVMHVSTAFNFSKKLEA) form a DNA-binding region, H-T-H motif.

As to quaternary structure, homodimer.

Functionally, negative regulator of protease production and sporulation. This Shouchella clausii (strain KSM-K16) (Alkalihalobacillus clausii) protein is HTH-type transcriptional regulator Hpr.